The sequence spans 491 residues: Peptidyl-prolyl isomerase CWC27 (491 aa).

The PPIase cyclophilin-type domain occupies 11 to 167 (TNGKVIIDTT…IPPKIRRIHI (157 aa)). Composition is skewed to basic and acidic residues over residues 186–202 (AQQK…EQRE), 268–298 (DLGK…REKA), and 306–316 (AEIKRMEEDLR). Disordered stretches follow at residues 186 to 427 (AQQK…IEVD) and 464 to 491 (RDLL…GRNR). The stretch at 277 to 327 (ASEEKKAVDLKNIRAQHEREKAGGSAARQAEIKRMEEDLRRLKKRSGSVSD) forms a coiled coil. Residues 323–333 (GSVSDSESDSS) show a composition bias toward low complexity. Basic residues predominate over residues 352–367 (ASKRGRAAMKAGNKRG). Acidic residues-rich tracts occupy residues 391 to 406 (DEPE…EGEA) and 418 to 427 (AEEEGGIEVD). Residues 482–491 (RTVRNSGRNR) show a composition bias toward basic residues.

This sequence belongs to the cyclophilin-type PPIase family. CWC27 subfamily. As to quaternary structure, associated with the spliceosome.

The protein resides in the cytoplasm. It localises to the nucleus. The enzyme catalyses [protein]-peptidylproline (omega=180) = [protein]-peptidylproline (omega=0). In terms of biological role, PPIases accelerate the folding of proteins. It catalyzes the cis-trans isomerization of proline imidic peptide bonds in oligopeptides. Involved in pre-mRNA splicing. The protein is Peptidyl-prolyl isomerase CWC27 (CWC27) of Cryptococcus neoformans var. neoformans serotype D (strain B-3501A) (Filobasidiella neoformans).